A 254-amino-acid polypeptide reads, in one-letter code: uncharacterized protein (254 aa).

The active-site Acyl-thioester intermediate is the C71. Catalysis depends on residues H110 and D125.

Belongs to the arylamine N-acetyltransferase family.

This is an uncharacterized protein from Bacillus subtilis (strain 168).